The primary structure comprises 677 residues: MATLHRQNAAGRRKVQVSYVIRDEVEKYNRNGVNALQLDPALNRLFTAGRDSIIRIWSVNQHKQDPYIASMEHHTDWVNDIILCCNGKTLISASSDTTVKVWNAHKGFCMSTLRTHKDYVKALAYAKDKELVASAGLDRQIFLWDVNTLTALTASNNTVTTSSLSGNKDSIYSLAMNQTGTVIISGSTEKVLRVWDPRTCAKLMKLKGHTDNVKSLLLNRDGTQCLSGSSDGTIRLWSLGQQRCIATYRVHDEGVWALQVNEAFTHIYSGGRDRKIYCTDLRNPDMRVLICEEKAPVLRMELDRSADPPQSIWVSTTKSFVNKWSLKAMHNFRASGDYDNDCSAPLTPLCTQPEQVIKGGTSIVQCHILNDKRHILTKDTNNSVAFWDVLKACKGEDLGKVDFDEEVKKRFKMVYVPNWFSVDLKTGMLTITLDESDCFAAWVAAKDAGFTSPDGSDPKLNLGGLLLQALLEFWPRTHINPMEEEENELNHVNGEQESRIQKGNGYFQVPPHTPVIFGEAGGRTLFRLLCRDSGGETESMLLNETVPQWVIDITVDKNMPKFNKIPFYLQPHSSSGAKTLKKDRLSASDMLQVRKVMEHVYEKIINLDTESQATSSSANDKPGEQEKEEDVSVMAEEKIELMCLDQVLDPNMDLRTVKHFIWKSGGDLTIHYRQKST.

WD repeat units follow at residues 28–67 (YNRN…QDPY), 73–112 (HHTD…CMST), 115–154 (THKD…ALTA), 166–205 (GNKD…KLMK), 208–247 (GHTD…CIAT), 250–289 (VHDE…MRVL), 292–334 (EEKA…NFRA), and 358–397 (KGGT…KGED). The tract at residues 611–632 (SQATSSSANDKPGEQEKEEDVS) is disordered.

The protein belongs to the WD repeat WDR48 family.

The protein resides in the nucleus. Its subcellular location is the cytoplasm. It localises to the lysosome. It is found in the late endosome. In terms of biological role, regulator of deubiquitinating complexes, which acts as a strong activator of usp1, usp12 and usp46. Enhances the usp1-mediated deubiquitination of fancd2; usp1 being almost inactive by itself. Activates deubiquitination by increasing the catalytic turnover without increasing the affinity of deubiquitinating enzymes for the substrate. Also activates deubiquitinating activity of complexes containing usp12. Together with rad51ap1, promotes DNA repair by stimulating rad51-mediated homologous recombination. Binds single-stranded DNA (ssDNA) and double-stranded DNA (dsDNA). DNA-binding is required both for usp1-mediated deubiquitination of fancd2 and stimulation of rad51-mediated homologous recombination: both wdr48/uaf1 and rad51ap1 have coordinated role in DNA-binding during these processes. Together with atad5 and by regulating usp1 activity, has a role in pcna-mediated translesion synthesis (TLS) by deubiquitinating monoubiquitinated pcna. Together with atad5, has a role in recruiting rad51 to stalled forks during replication stress. The chain is WD repeat-containing protein 48 (wdr48) from Danio rerio (Zebrafish).